Consider the following 76-residue polypeptide: Acyl carrier protein (76 aa).

Residues 1–76 (MATFDEVKEV…AAVDYIGSKQ (76 aa)) form the Carrier domain. Serine 36 bears the O-(pantetheine 4'-phosphoryl)serine mark.

This sequence belongs to the acyl carrier protein (ACP) family. Post-translationally, 4'-phosphopantetheine is transferred from CoA to a specific serine of apo-ACP by AcpS. This modification is essential for activity because fatty acids are bound in thioester linkage to the sulfhydryl of the prosthetic group.

It localises to the cytoplasm. It participates in lipid metabolism; fatty acid biosynthesis. Its function is as follows. Carrier of the growing fatty acid chain in fatty acid biosynthesis. The sequence is that of Acyl carrier protein from Deinococcus geothermalis (strain DSM 11300 / CIP 105573 / AG-3a).